The primary structure comprises 488 residues: Patatin-like protein 7 (488 aa).

Residues Gln-23–Met-49 form a disordered region. Positions Ala-32–Thr-47 are enriched in polar residues. In terms of domain architecture, PNPLA spans Leu-101–Ile-301. The short motif at Gly-105 to Gly-110 is the GXGXXG element. Residue Ser-145 is the Nucleophile of the active site.

The protein belongs to the patatin family. Highly expressed in roots and at lower levels in leaves, stems, flowers and siliques.

Its subcellular location is the cell membrane. In terms of biological role, possesses non-specific lipolytic acyl hydrolase (LAH) activity. Catalyzes the hydrolysis of the galactolipids monogalactosyldiacylglycerol (MGDG) and digalactosyldiacylglycerol (DGDG), and the phoshpolipids phosphatidylcholine (PC), phosphatidylethanolamine (PE), phosphatidylglycerol (PG), phosphatidic acid (PA), phosphatidylserine (PS). Favors the release of fatty acid at the sn-2 position for PC. Possesses acyl-CoA thioesterase activity. Negatively affects disease resistance to the necrotic fungal pathogen Botrytis cinerea and the avirulent bacteria Pseudomonas syringae by promoting cell death and reducing the efficiency of the hypersensitive response, respectively. However, PLP2 contributes to resistance to cucumber mosaic virus (CMV), an obligate parasite inducing hypersensitive response. May negatively regulate oxylipin production, possibly via participating in membrane repair that includes removal of oxidatively modified lipids. Enzymatic products of PLP2 may influence cellulose content and cell elongation. This Arabidopsis thaliana (Mouse-ear cress) protein is Patatin-like protein 7 (PLP7).